Consider the following 414-residue polypeptide: uncharacterized protein (414 aa).

Residues 87 to 117 (KTNDDNKTNGRETHLRPSPSKPEYTGRPTQN) form a disordered region. Residues 88–101 (TNDDNKTNGRETHL) show a composition bias toward basic and acidic residues. Residues 243–405 (SMLQSSIDKL…RNKLEMEVER (163 aa)) adopt a coiled-coil conformation.

This is an uncharacterized protein from Encephalitozoon cuniculi (strain GB-M1) (Microsporidian parasite).